A 141-amino-acid chain; its full sequence is HTH-type transcriptional repressor NsrR (141 aa).

The 128-residue stretch at 2 to 129 folds into the HTH rrf2-type domain; that stretch reads QLTSFTDYAL…DECTIESLLS (128 aa). Positions 28–51 form a DNA-binding region, H-T-H motif; the sequence is ITEVTDLFGVSRNHMVKVINRLGQ. [2Fe-2S] cluster-binding residues include Cys91, Cys96, and Cys102.

It depends on [2Fe-2S] cluster as a cofactor.

In terms of biological role, nitric oxide-sensitive repressor of genes involved in protecting the cell against nitrosative stress. May require iron for activity. This is HTH-type transcriptional repressor NsrR from Vibrio parahaemolyticus serotype O3:K6 (strain RIMD 2210633).